The following is a 459-amino-acid chain: Cysteine--tRNA ligase (459 aa).

Cysteine 28 provides a ligand contact to Zn(2+). Residues 30–40 (VTIYDLCHIGH) carry the 'HIGH' region motif. Zn(2+) contacts are provided by cysteine 209, histidine 234, and glutamate 238. The 'KMSKS' region motif lies at 266–270 (KMSKS). ATP is bound at residue lysine 269.

It belongs to the class-I aminoacyl-tRNA synthetase family. Monomer. The cofactor is Zn(2+).

The protein localises to the cytoplasm. The enzyme catalyses tRNA(Cys) + L-cysteine + ATP = L-cysteinyl-tRNA(Cys) + AMP + diphosphate. This Shewanella piezotolerans (strain WP3 / JCM 13877) protein is Cysteine--tRNA ligase.